A 357-amino-acid polypeptide reads, in one-letter code: Membrane-bound lytic murein transglycosylase C (357 aa).

The first 16 residues, 1 to 16 (MKKLLALFVIAPILIS), serve as a signal peptide directing secretion. Cysteine 17 carries N-palmitoyl cysteine lipidation. The S-diacylglycerol cysteine moiety is linked to residue cysteine 17.

The protein belongs to the transglycosylase Slt family.

The protein resides in the cell outer membrane. It catalyses the reaction Exolytic cleavage of the (1-&gt;4)-beta-glycosidic linkage between N-acetylmuramic acid (MurNAc) and N-acetylglucosamine (GlcNAc) residues in peptidoglycan, from either the reducing or the non-reducing ends of the peptidoglycan chains, with concomitant formation of a 1,6-anhydrobond in the MurNAc residue.. Its function is as follows. Murein-degrading enzyme. May play a role in recycling of muropeptides during cell elongation and/or cell division. This is Membrane-bound lytic murein transglycosylase C from Photorhabdus laumondii subsp. laumondii (strain DSM 15139 / CIP 105565 / TT01) (Photorhabdus luminescens subsp. laumondii).